A 395-amino-acid polypeptide reads, in one-letter code: Neuromedin-U receptor 2 (395 aa).

Topologically, residues 1–41 are extracellular; sequence MGKLENASWIHDSLMKYLNSTEEYLAYLCGPKRSDLSLPVS. N-linked (GlcNAc...) asparagine glycans are attached at residues Asn-6 and Asn-19. Residues 42-62 traverse the membrane as a helical segment; sequence VVYALIFVVGVIGNLLVCLVI. Topologically, residues 63–74 are cytoplasmic; the sequence is ARHQTLKTPTNY. The chain crosses the membrane as a helical span at residues 75–95; it reads YLFSLAVSDLLVLLLGMPLEV. Over 96–115 the chain is Extracellular; the sequence is YELWHNYPFLFGPVGCYFKT. Cys-111 and Cys-196 are disulfide-bonded. The chain crosses the membrane as a helical span at residues 116 to 138; that stretch reads ALFETVCFASILSVTTVSIERYV. Residues 139–157 lie on the Cytoplasmic side of the membrane; sequence AIVHPFRAKLESTRRRALR. A helical membrane pass occupies residues 158-178; the sequence is ILSLVWSFSVVFSLPNTSIHG. At 179–212 the chain is on the extracellular side; sequence IKFQQFPNGSSVPGSATCTVTKPIWVYNFIIQAT. N-linked (GlcNAc...) asparagine glycosylation occurs at Asn-186. The helical transmembrane segment at 213 to 233 threads the bilayer; that stretch reads SFLFYILPMTLISVLYYLMGL. The Cytoplasmic portion of the chain corresponds to 234–257; sequence RLKRDESLEADKVTVNIHRPSRKS. Residues 258–278 traverse the membrane as a helical segment; sequence VTKMLFVLVLVFAICWTPFHV. Topologically, residues 279-293 are extracellular; the sequence is DRLFFSFVDEWTESL. Residues 294 to 314 form a helical membrane-spanning segment; sequence AAVFNLIHVVSGVFFYLSSAV. At 315 to 395 the chain is on the cytoplasmic side; it reads NPIIYNLLSR…TTVPCVEEVP (81 aa).

This sequence belongs to the G-protein coupled receptor 1 family. In terms of tissue distribution, expressed primarily in brain tissues, more specifically in medulla and spinal cord. Widespread distribution in peripheral tissues.

It is found in the cell membrane. Receptor for the neuromedin-U and neuromedin-S neuropeptides. This chain is Neuromedin-U receptor 2 (Nmur2), found in Mus musculus (Mouse).